The sequence spans 37 residues: Large ribosomal subunit protein bL36 (37 aa).

Belongs to the bacterial ribosomal protein bL36 family.

The polypeptide is Large ribosomal subunit protein bL36 (Moorella thermoacetica (strain ATCC 39073 / JCM 9320)).